The chain runs to 119 residues: Holo-[acyl-carrier-protein] synthase (119 aa).

Mg(2+)-binding residues include Asp-8 and Glu-58.

Belongs to the P-Pant transferase superfamily. AcpS family. The cofactor is Mg(2+).

The protein localises to the cytoplasm. The catalysed reaction is apo-[ACP] + CoA = holo-[ACP] + adenosine 3',5'-bisphosphate + H(+). Its function is as follows. Transfers the 4'-phosphopantetheine moiety from coenzyme A to a Ser of acyl-carrier-protein. This chain is Holo-[acyl-carrier-protein] synthase, found in Bacillus cereus (strain ZK / E33L).